The chain runs to 440 residues: Proline--tRNA ligase (440 aa).

The protein belongs to the class-II aminoacyl-tRNA synthetase family. ProS type 2 subfamily. Homodimer.

It is found in the cytoplasm. The enzyme catalyses tRNA(Pro) + L-proline + ATP = L-prolyl-tRNA(Pro) + AMP + diphosphate. Its function is as follows. Catalyzes the attachment of proline to tRNA(Pro) in a two-step reaction: proline is first activated by ATP to form Pro-AMP and then transferred to the acceptor end of tRNA(Pro). This Xanthobacter autotrophicus (strain ATCC BAA-1158 / Py2) protein is Proline--tRNA ligase.